Consider the following 155-residue polypeptide: Ubiquitin-conjugating enzyme E2 14 (155 aa).

One can recognise a UBC core domain in the interval 7-154; that stretch reads SSSRRLTKEY…ARDYVEQFAK (148 aa). Cys91 (glycyl thioester intermediate) is an active-site residue.

The protein belongs to the ubiquitin-conjugating enzyme family.

It catalyses the reaction S-ubiquitinyl-[E1 ubiquitin-activating enzyme]-L-cysteine + [E2 ubiquitin-conjugating enzyme]-L-cysteine = [E1 ubiquitin-activating enzyme]-L-cysteine + S-ubiquitinyl-[E2 ubiquitin-conjugating enzyme]-L-cysteine.. It functions in the pathway protein modification; protein ubiquitination. Its function is as follows. Catalyzes the covalent attachment of ubiquitin to other proteins. Mediates the selective degradation of short-lived and abnormal proteins. This is Ubiquitin-conjugating enzyme E2 14 (ubc14) from Schizosaccharomyces pombe (strain 972 / ATCC 24843) (Fission yeast).